Here is a 362-residue protein sequence, read N- to C-terminus: S-adenosylmethionine:tRNA ribosyltransferase-isomerase (362 aa).

The protein belongs to the QueA family. Monomer.

It is found in the cytoplasm. It catalyses the reaction 7-aminomethyl-7-carbaguanosine(34) in tRNA + S-adenosyl-L-methionine = epoxyqueuosine(34) in tRNA + adenine + L-methionine + 2 H(+). It functions in the pathway tRNA modification; tRNA-queuosine biosynthesis. Transfers and isomerizes the ribose moiety from AdoMet to the 7-aminomethyl group of 7-deazaguanine (preQ1-tRNA) to give epoxyqueuosine (oQ-tRNA). The sequence is that of S-adenosylmethionine:tRNA ribosyltransferase-isomerase from Syntrophus aciditrophicus (strain SB).